A 406-amino-acid chain; its full sequence is Inactive serine protease 35 (406 aa).

The first 17 residues, 1 to 17 (MLLWLIIFVSGWTLSLG), serve as a signal peptide directing secretion. Asn87 carries an N-linked (GlcNAc...) asparagine glycan. One can recognise a Peptidase S1 domain in the interval 121-401 (VYGTDSRFSI…ICLWIHGNAA (281 aa)). A disulfide bridge links Cys151 with Cys167. Basic residues predominate over residues 186–204 (LKMRNKGGRKKRRGSRRSR). The tract at residues 186–248 (LKMRNKGGRK…RPSFQWTRVK (63 aa)) is disordered.

Belongs to the peptidase S1 family.

Its subcellular location is the secreted. This is Inactive serine protease 35 (Prss35) from Rattus norvegicus (Rat).